The sequence spans 454 residues: MIAEQHQAVVDSGASKKGAKVGFVSLGCPKNLVDSERILTQLRTEGYDVTNSYDDAELVIVNTCGFIDSAVQESLDTIGEALAANGKVLVTGCLGVKKDEIIELHPNVLGVTGPHAYDEVLAQVHEHVAKPEHNPFIDLVPPQGVKLTPKHYAYLKISEGCNHRCTFCIIPSMRGDLDSRPVGDVLGEAKRLVDSGVKELLVISQDTSAYGVDVKHKTDFWDGMPVKTHMQQLCEELAKQGVWIRLHYVYPYPHVDKIIPLMAEGKILPYLDIPFQHANKRILKLMKRPGSSDRVLERIAKWREICPELVIRSTFIVGFPGETEEEFEELLNFLEEAQLDRVGCFKYSPVEGATANALPDHVSDEVMEDRLQRFMAVQAKISSDKLQVRIGQEYLILVDEVNGLGIVGRSYMDAPEVDGKVYLSDDYDAKPGDQIWVQIIHADEHDVWGVRVED.

The MTTase N-terminal domain occupies 19–129 (AKVGFVSLGC…VLAQVHEHVA (111 aa)). Residues Cys-28, Cys-64, Cys-93, Cys-161, Cys-165, and Cys-168 each contribute to the [4Fe-4S] cluster site. In terms of domain architecture, Radical SAM core spans 147–384 (LTPKHYAYLK…MAVQAKISSD (238 aa)). Residues 387–453 (QVRIGQEYLI…EHDVWGVRVE (67 aa)) form the TRAM domain.

Belongs to the methylthiotransferase family. RimO subfamily. Requires [4Fe-4S] cluster as cofactor.

Its subcellular location is the cytoplasm. It catalyses the reaction L-aspartate(89)-[ribosomal protein uS12]-hydrogen + (sulfur carrier)-SH + AH2 + 2 S-adenosyl-L-methionine = 3-methylsulfanyl-L-aspartate(89)-[ribosomal protein uS12]-hydrogen + (sulfur carrier)-H + 5'-deoxyadenosine + L-methionine + A + S-adenosyl-L-homocysteine + 2 H(+). In terms of biological role, catalyzes the methylthiolation of an aspartic acid residue of ribosomal protein uS12. The sequence is that of Ribosomal protein uS12 methylthiotransferase RimO from Colwellia psychrerythraea (strain 34H / ATCC BAA-681) (Vibrio psychroerythus).